The following is an 85-amino-acid chain: Large ribosomal subunit protein bL27 (85 aa).

A disordered region spans residues M1–V23.

Belongs to the bacterial ribosomal protein bL27 family.

This Thioalkalivibrio sulfidiphilus (strain HL-EbGR7) protein is Large ribosomal subunit protein bL27.